The chain runs to 201 residues: MELVLKDAQSALTVSETTFGRDFNEALVHQVVVAYAAGARQGSRGQKTRAEVTGSGKKPWRQKGTGRARSGSVKSPIWRSGGVTFAAKPQDHSQKVNKKMYRGALKSILSELVRQDRLIVVEQFSVKAPKTKLLAQKLKDMALEDVLIITGELDENLFLAARNLYKVDVRDANGIDPVSLIAFDKVVMTADAVKQVEEMLA.

Positions 43 to 73 (SRGQKTRAEVTGSGKKPWRQKGTGRARSGSV) are disordered.

The protein belongs to the universal ribosomal protein uL4 family. As to quaternary structure, part of the 50S ribosomal subunit.

In terms of biological role, one of the primary rRNA binding proteins, this protein initially binds near the 5'-end of the 23S rRNA. It is important during the early stages of 50S assembly. It makes multiple contacts with different domains of the 23S rRNA in the assembled 50S subunit and ribosome. Functionally, forms part of the polypeptide exit tunnel. The sequence is that of Large ribosomal subunit protein uL4 from Sodalis glossinidius (strain morsitans).